The following is a 738-amino-acid chain: LPS-assembly protein LptD (738 aa).

The signal sequence occupies residues 1 to 26 (MEHKRNNILLAGLFFLLLGLVSIARA).

Belongs to the LptD family. In terms of assembly, component of the lipopolysaccharide transport and assembly complex. Interacts with LptE and LptA.

Its subcellular location is the cell outer membrane. Its function is as follows. Together with LptE, is involved in the assembly of lipopolysaccharide (LPS) at the surface of the outer membrane. This Nitrosococcus oceani (strain ATCC 19707 / BCRC 17464 / JCM 30415 / NCIMB 11848 / C-107) protein is LPS-assembly protein LptD.